We begin with the raw amino-acid sequence, 2209 residues long: Orsellinic acid synthase armB (2209 aa).

The tract at residues 38–261 is N-terminal acylcarrier protein transacylase domain (SAT); the sequence is LLLDACYYAF…HKTTVDALYH (224 aa). One can recognise a Ketosynthase family 3 (KS3) domain in the interval 391-817; sequence QEPIAICGMS…GSNGALLLEE (427 aa). Active-site for beta-ketoacyl synthase activity residues include Cys-561, His-696, and His-736. Positions 914–1239 are malonyl-CoA:ACP transacylase (MAT) domain; that stretch reads VFVFSGQGGQ…NLTLSSSLSQ (326 aa). Residue Ser-1008 is the For acyl/malonyl transferase activity of the active site. The tract at residues 1306-1436 is N-terminal hotdog fold; that stretch reads MLQSWAQFPS…GQFRPLLVAD (131 aa). The 308-residue stretch at 1306–1613 folds into the PKS/mFAS DH domain; sequence MLQSWAQFPS…FKKLRLNTLQ (308 aa). The product template (PT) domain stretch occupies residues 1335 to 1610; that stretch reads ITGHIVGDVP…GMCFKKLRLN (276 aa). His-1338 functions as the Proton acceptor; for dehydratase activity in the catalytic mechanism. The segment at 1463–1613 is C-terminal hotdog fold; sequence AEVITTRTAY…FKKLRLNTLQ (151 aa). Residue Asp-1524 is the Proton donor; for dehydratase activity of the active site. Carrier domains follow at residues 1659–1734 and 1844–1921; these read VDVQ…SSTI and SSSS…SSKQ. An O-(pantetheine 4'-phosphoryl)serine mark is found at Ser-1693 and Ser-1881. The segment at 1917-1945 is disordered; it reads ISSKQPGKSPKPSEEATMDPDKEEDLSDL. Residues 1932–1943 show a composition bias toward acidic residues; sequence ATMDPDKEEDLS. Positions 1962–2201 are thioesterase (TE) domain; that stretch reads VPMSVQKSSS…LGAVTQALVD (240 aa).

The catalysed reaction is 3 malonyl-CoA + acetyl-CoA + 2 H(+) = orsellinate + 3 CO2 + 4 CoA. The protein operates within secondary metabolite biosynthesis. Its function is as follows. Non-reducing polyketide synthase, part of the gene cluster that mediates the biosynthesis of melleolides, a range of antifungal and phytotoxic polyketide derivatives composed of an orsellinic acid (OA) moiety esterified to various sesquiterpene alcohols. The first step in melleolides biosynthesis is performed by the delta(6)-protoilludene synthase PRO1 which catalyzes the cyclization of farnesyl diphosphate to protoilludene. The orsellinic acid synthase armB produces OA by condensing acetyl-CoA with 3 malonyl-CoA units in a three-round chain elongation reaction folowed by a C2-C7 ring closure. ArmB further catalyzes the trans-esterification of OA to the various sesquiterpene alcohols resulting from the hydroxylation of protoilludene. The melleolides cluster also includes 5 cytochrome P450 monooxygenases, 4 NAD(+)-dependent oxidoreductases, one flavin-dependent oxidoreductase, and one O-methyltransferase. The cytochrome P450 monooxygenases may be involved in protoilludene hydroxylation to elaborate melleolides with multiple alcohol groups, such as melleolide D, which carries alcohol functionalities at C-4, C-5, C-10, and C-13. The role of the NAD(+)-dependent enzymes remains unknown. Numerous melleolides, including arnamial, show 5'-O-methylation of the aromatic moiety which may be catalyzed by the methyltransferase encoded in the cluster. The flavin-dependent oxidoreductase might represent the dehydrogenase yielding the aldehyde in position 1 of arnamial and other melleolides. Finally, several halogenase localized outside of the cluster (armH1 to armH5), are able to catalyze the transfer of a single chlorine atom to the melleolide backbone, resulting in a 6'-chloromelleolide product. The chain is Orsellinic acid synthase armB from Armillaria mellea (Honey mushroom).